Reading from the N-terminus, the 545-residue chain is Glucose-6-phosphate isomerase (545 aa).

Glutamate 351 serves as the catalytic Proton donor. Active-site residues include histidine 382 and lysine 510.

The protein belongs to the GPI family.

The protein resides in the cytoplasm. It catalyses the reaction alpha-D-glucose 6-phosphate = beta-D-fructose 6-phosphate. The protein operates within carbohydrate biosynthesis; gluconeogenesis. It participates in carbohydrate degradation; glycolysis; D-glyceraldehyde 3-phosphate and glycerone phosphate from D-glucose: step 2/4. Catalyzes the reversible isomerization of glucose-6-phosphate to fructose-6-phosphate. The protein is Glucose-6-phosphate isomerase of Helicobacter pylori (strain ATCC 700392 / 26695) (Campylobacter pylori).